We begin with the raw amino-acid sequence, 536 residues long: CTP synthase (536 aa).

Residues 1–267 are amidoligase domain; sequence MSKFVFVTGG…CKETLKYLEL (267 aa). Position 13 (Ser-13) interacts with CTP. Ser-13 contributes to the UTP binding site. ATP-binding positions include 14–19 and Asp-71; that span reads SIGKGI. 2 residues coordinate Mg(2+): Asp-71 and Glu-141. Residues 148–150, 188–193, and Lys-224 contribute to the CTP site; these read DIE and KTKPTQ. UTP-binding positions include 188 to 193 and Lys-224; that span reads KTKPTQ. The Glutamine amidotransferase type-1 domain maps to 292 to 534; it reads KVALVGKYIE…IKASQEKLTQ (243 aa). L-glutamine is bound at residue Gly-354. Cys-381 functions as the Nucleophile; for glutamine hydrolysis in the catalytic mechanism. L-glutamine is bound by residues 382–385, Glu-405, and Arg-462; that span reads LGMQ. Active-site residues include His-507 and Glu-509.

This sequence belongs to the CTP synthase family. Homotetramer.

It catalyses the reaction UTP + L-glutamine + ATP + H2O = CTP + L-glutamate + ADP + phosphate + 2 H(+). It carries out the reaction L-glutamine + H2O = L-glutamate + NH4(+). The enzyme catalyses UTP + NH4(+) + ATP = CTP + ADP + phosphate + 2 H(+). It functions in the pathway pyrimidine metabolism; CTP biosynthesis via de novo pathway; CTP from UDP: step 2/2. Its activity is regulated as follows. Allosterically activated by GTP, when glutamine is the substrate; GTP has no effect on the reaction when ammonia is the substrate. The allosteric effector GTP functions by stabilizing the protein conformation that binds the tetrahedral intermediate(s) formed during glutamine hydrolysis. Inhibited by the product CTP, via allosteric rather than competitive inhibition. In terms of biological role, catalyzes the ATP-dependent amination of UTP to CTP with either L-glutamine or ammonia as the source of nitrogen. Regulates intracellular CTP levels through interactions with the four ribonucleotide triphosphates. This chain is CTP synthase, found in Prochlorococcus marinus (strain MIT 9215).